The primary structure comprises 409 residues: MALVNENYLKLPGSYLFSEIARRVNQFKKANPEADIIRLGIGDVTRPLVPAVVEAMKKAVDEMGRAETFRGYGPEQGYDFLIGQIIENDYKPRGIDLGMDEVFVSDGSKCDTANFQEILGIGNIVAVTDPVYPVYVDSNVMAGRSGAFNEKGQFDDIVYLPCTEANGMKPELPKTRVDMIYLCFPNNPTGMTLTKEELKQWVDYARENKSIILYDAAYEAFIQEAHIPRSIYEIEGAREVAVEFRSFSKTAGFTGTRCAFTVVPKEVMAYDREGRAYSLNGLWLRRQTTKFNGVSYPVQAAAAAIYTEAGKKQVKETIEYYMENARIIREGLVEAGYKVFGGVNAPYIWLKTPDNMSSWDFFDKLISVANVVGTPGAGFGASGEGYFRLTAFGTRENTVKALERIRTRM.

Residues Y15 and G42 each contribute to the substrate site. Pyridoxal 5'-phosphate is bound by residues Y72, 108–109 (SK), Y132, N187, Y218, and 246–248 (SFS). 3 residues coordinate substrate: K109, Y132, and N187. K249 is subject to N6-(pyridoxal phosphate)lysine. Residues R257 and N292 each coordinate pyridoxal 5'-phosphate. The substrate site is built by N292 and R388.

Belongs to the class-I pyridoxal-phosphate-dependent aminotransferase family. LL-diaminopimelate aminotransferase subfamily. In terms of assembly, homodimer. It depends on pyridoxal 5'-phosphate as a cofactor.

The enzyme catalyses (2S,6S)-2,6-diaminopimelate + 2-oxoglutarate = (S)-2,3,4,5-tetrahydrodipicolinate + L-glutamate + H2O + H(+). It functions in the pathway amino-acid biosynthesis; L-lysine biosynthesis via DAP pathway; LL-2,6-diaminopimelate from (S)-tetrahydrodipicolinate (aminotransferase route): step 1/1. Functionally, involved in the synthesis of meso-diaminopimelate (m-DAP or DL-DAP), required for both lysine and peptidoglycan biosynthesis. Catalyzes the direct conversion of tetrahydrodipicolinate to LL-diaminopimelate. This is LL-diaminopimelate aminotransferase from Heliobacterium modesticaldum (strain ATCC 51547 / Ice1).